The primary structure comprises 481 residues: NADH-quinone oxidoreductase subunit N (481 aa).

13 helical membrane-spanning segments follow: residues Leu-14–Phe-34, Ile-38–Ala-57, Phe-76–Phe-96, Pro-108–Leu-128, Phe-162–Phe-182, Met-204–His-224, Pro-235–Leu-255, Ile-272–Thr-292, Leu-297–Ser-317, Ala-323–Leu-343, Leu-369–Phe-389, Gly-403–Leu-423, and Gly-449–Leu-469.

The protein belongs to the complex I subunit 2 family. In terms of assembly, NDH-1 is composed of 14 different subunits. Subunits NuoA, H, J, K, L, M, N constitute the membrane sector of the complex.

The protein resides in the cell inner membrane. The catalysed reaction is a quinone + NADH + 5 H(+)(in) = a quinol + NAD(+) + 4 H(+)(out). In terms of biological role, NDH-1 shuttles electrons from NADH, via FMN and iron-sulfur (Fe-S) centers, to quinones in the respiratory chain. The immediate electron acceptor for the enzyme in this species is believed to be ubiquinone. Couples the redox reaction to proton translocation (for every two electrons transferred, four hydrogen ions are translocated across the cytoplasmic membrane), and thus conserves the redox energy in a proton gradient. The protein is NADH-quinone oxidoreductase subunit N of Rhizorhabdus wittichii (strain DSM 6014 / CCUG 31198 / JCM 15750 / NBRC 105917 / EY 4224 / RW1) (Sphingomonas wittichii).